The primary structure comprises 177 residues: ATP synthase subunit delta (177 aa).

This sequence belongs to the ATPase delta chain family. As to quaternary structure, F-type ATPases have 2 components, F(1) - the catalytic core - and F(0) - the membrane proton channel. F(1) has five subunits: alpha(3), beta(3), gamma(1), delta(1), epsilon(1). F(0) has three main subunits: a(1), b(2) and c(10-14). The alpha and beta chains form an alternating ring which encloses part of the gamma chain. F(1) is attached to F(0) by a central stalk formed by the gamma and epsilon chains, while a peripheral stalk is formed by the delta and b chains.

The protein resides in the cell membrane. In terms of biological role, f(1)F(0) ATP synthase produces ATP from ADP in the presence of a proton or sodium gradient. F-type ATPases consist of two structural domains, F(1) containing the extramembraneous catalytic core and F(0) containing the membrane proton channel, linked together by a central stalk and a peripheral stalk. During catalysis, ATP synthesis in the catalytic domain of F(1) is coupled via a rotary mechanism of the central stalk subunits to proton translocation. Its function is as follows. This protein is part of the stalk that links CF(0) to CF(1). It either transmits conformational changes from CF(0) to CF(1) or is implicated in proton conduction. The polypeptide is ATP synthase subunit delta (Exiguobacterium sibiricum (strain DSM 17290 / CCUG 55495 / CIP 109462 / JCM 13490 / 255-15)).